The sequence spans 387 residues: Protein adenylyltransferase VopS (387 aa).

Residues 76 to 77 (IT), 122 to 124 (LDS), 353 to 355 (GNG), and Arg359 each bind ATP. Positions 278-387 (LNMDNLKELH…NAENSLHGIK (110 aa)) constitute a Fido domain.

It is found in the secreted. It carries out the reaction L-tyrosyl-[protein] + ATP = O-(5'-adenylyl)-L-tyrosyl-[protein] + diphosphate. The catalysed reaction is L-threonyl-[protein] + ATP = 3-O-(5'-adenylyl)-L-threonyl-[protein] + diphosphate. Functionally, adenylyltransferase involved in virulence by mediating the addition of adenosine 5'-monophosphate (AMP) to specific threonine residue of host Rho GTPases RhoA, Rac and Cdc42. The resulting AMPylation prevents the interaction of Rho GTPases with downstream effectors, thereby inhibiting actin assembly in infected cells. This is Protein adenylyltransferase VopS (vopS) from Vibrio parahaemolyticus serotype O3:K6 (strain RIMD 2210633).